A 330-amino-acid chain; its full sequence is Beta-ketoacyl-[acyl-carrier-protein] synthase III (330 aa).

Active-site residues include Cys-115 and His-255. Residues Gln-256–Arg-260 form an ACP-binding region. Residue Asn-285 is part of the active site.

It belongs to the thiolase-like superfamily. FabH family. Homodimer.

The protein localises to the cytoplasm. It carries out the reaction malonyl-[ACP] + acetyl-CoA + H(+) = 3-oxobutanoyl-[ACP] + CO2 + CoA. Its pathway is lipid metabolism; fatty acid biosynthesis. Its function is as follows. Catalyzes the condensation reaction of fatty acid synthesis by the addition to an acyl acceptor of two carbons from malonyl-ACP. Catalyzes the first condensation reaction which initiates fatty acid synthesis and may therefore play a role in governing the total rate of fatty acid production. Possesses both acetoacetyl-ACP synthase and acetyl transacylase activities. Its substrate specificity determines the biosynthesis of branched-chain and/or straight-chain of fatty acids. The chain is Beta-ketoacyl-[acyl-carrier-protein] synthase III from Helicobacter pylori (strain G27).